Reading from the N-terminus, the 241-residue chain is MTASADIRLSDVRFSYGETAMHFDVTITGGEIAAIVGPSGSGKSTFLNLIAGFETPQSGIISINGVDVTHLPPADRPVSMVFQENNLFAHLTVEQNVDLGRSPNLRLNEEDRKAVASALARVGLQGKEKRKPEALSGGERQRVAIARVLVRERPVLLLDEAFASLGPALRHQMLDLVNKLRRETGMTVLMVTHTPEDALHLDALLIFLDNGKIAAQGPATEMLSRAGPEALRHYIGEMRSF.

Residues 7 to 235 enclose the ABC transporter domain; the sequence is IRLSDVRFSY…AGPEALRHYI (229 aa). Residue 37 to 44 coordinates ATP; it reads GPSGSGKS.

Belongs to the ABC transporter superfamily. Thiamine importer (TC 3.A.1.19.1) family. As to quaternary structure, the complex is composed of two ATP-binding proteins (ThiQ), two transmembrane proteins (ThiP) and a solute-binding protein (ThiB).

Its subcellular location is the cell inner membrane. It catalyses the reaction thiamine(out) + ATP + H2O = thiamine(in) + ADP + phosphate + H(+). Part of the ABC transporter complex ThiBPQ involved in thiamine import. Responsible for energy coupling to the transport system. In Brucella melitensis biotype 1 (strain ATCC 23456 / CCUG 17765 / NCTC 10094 / 16M), this protein is Thiamine import ATP-binding protein ThiQ.